A 622-amino-acid polypeptide reads, in one-letter code: MRLLRRRHMAVRLVMVGSAFVLFLFILQRDVSGREQATEKPWLRSLVSQKDHVLDLMLGAVHNLRDSMPKFQIRAPEPQQTLASTNQSCLPGFYTPAELKPFWERPPQDPNGPGADGKAFQKKEWTPQETQEKEEGYKKHCFNAFASDRISLQRALGPDTRPPECVDQKFRRCPPLPATSVIIVFHNEAWSTLLRTVYSVLHTTPAILLKEIILVDDASTDEYLKEPLERYVKQLQVVQVVRQQERKGLITARLLGASVAQAEVLTFLDAHCECFHGWLEPLLARIAEDETVVVSPNIVTIDLNTFEFSKPVQRGRVQSRGNFDWSLTFGWEVLPAREKQRRKDETYPIKSPTFAGGLFSISKSYFEHIGTYDNQMEIWGGENVEMSFRVWQCGGQLEIIPCSVVGHVFRTKSPHTFPKGINVIARNQVRLAEVWMDGYKEIFYRRNLQAAQMAREKSFGDISERLQLRERLNCHNFSWFLDNVYPEMFVPDLKPTFFGALKNLGVDHCLDVGENNNGGKPLILYTCHGLGGNQYFEYTTQRDLRHNIAKQLCLHASAGTLGLRSCHFTGKNSQVPKDEEWEFTQDQLIRNSGSGTCLTSKDKKPVMATCNPSDPHQHWLFI.

Topologically, residues 1 to 8 (MRLLRRRH) are cytoplasmic. The chain crosses the membrane as a helical; Signal-anchor for type II membrane protein span at residues 9-28 (MAVRLVMVGSAFVLFLFILQ). Residues 29 to 622 (RDVSGREQAT…SDPHQHWLFI (594 aa)) lie on the Lumenal side of the membrane. A glycan (N-linked (GlcNAc...) asparagine) is linked at Asn-86. Residues 103–135 (WERPPQDPNGPGADGKAFQKKEWTPQETQEKEE) form a disordered region. Basic and acidic residues predominate over residues 119–135 (AFQKKEWTPQETQEKEE). The segment at 176–285 (LPATSVIIVF…HGWLEPLLAR (110 aa)) is catalytic subdomain A. Residues Asp-269, His-271, and His-407 each contribute to the Mn(2+) site. Residues 348–410 (PIKSPTFAGG…PCSVVGHVFR (63 aa)) form a catalytic subdomain B region. A glycan (N-linked (GlcNAc...) asparagine) is linked at Asn-476. In terms of domain architecture, Ricin B-type lectin spans 507 to 622 (DHCLDVGENN…SDPHQHWLFI (116 aa)). The cysteines at positions 509 and 527 are disulfide-linked. Residues Asp-511, Glu-514, His-528, and Asn-533 each contribute to the UDP-N-acetyl-alpha-D-galactosamine site. Cystine bridges form between Cys-553/Cys-566 and Cys-597/Cys-610.

The protein belongs to the glycosyltransferase 2 family. GalNAc-T subfamily. The cofactor is Mn(2+).

The protein localises to the golgi apparatus membrane. It carries out the reaction L-seryl-[protein] + UDP-N-acetyl-alpha-D-galactosamine = a 3-O-[N-acetyl-alpha-D-galactosaminyl]-L-seryl-[protein] + UDP + H(+). The catalysed reaction is L-threonyl-[protein] + UDP-N-acetyl-alpha-D-galactosamine = a 3-O-[N-acetyl-alpha-D-galactosaminyl]-L-threonyl-[protein] + UDP + H(+). It functions in the pathway protein modification; protein glycosylation. In terms of biological role, catalyzes the initial reaction in O-linked oligosaccharide biosynthesis, the transfer of an N-acetyl-D-galactosamine residue to a serine or threonine residue on the protein receptor. May participate in synthesis of oncofetal fibronectin. Has activity toward MUC1A, MUC2, EA2 and fibronectin peptides. This is Polypeptide N-acetylgalactosaminyltransferase 6 (GALNT6) from Bos taurus (Bovine).